Here is a 460-residue protein sequence, read N- to C-terminus: GTPase Der (460 aa).

2 EngA-type G domains span residues 3-167 (FTIA…PEPT) and 189-364 (IRVA…AIWN). GTP contacts are provided by residues 9–16 (GRPNVGKS), 56–60 (DTAGL), 119–122 (NKSE), 195–202 (GRPNAGKS), 242–246 (DTAGL), and 307–310 (NKWD). Residues 365–449 (RRVPTAALNR…PIRITLREKA (85 aa)) enclose the KH-like domain.

Belongs to the TRAFAC class TrmE-Era-EngA-EngB-Septin-like GTPase superfamily. EngA (Der) GTPase family. As to quaternary structure, associates with the 50S ribosomal subunit.

Functionally, GTPase that plays an essential role in the late steps of ribosome biogenesis. In Nitrobacter hamburgensis (strain DSM 10229 / NCIMB 13809 / X14), this protein is GTPase Der.